The chain runs to 293 residues: Elongation factor Ts (293 aa).

An involved in Mg(2+) ion dislocation from EF-Tu region spans residues 80 to 83 (TDFV).

This sequence belongs to the EF-Ts family.

The protein localises to the cytoplasm. In terms of biological role, associates with the EF-Tu.GDP complex and induces the exchange of GDP to GTP. It remains bound to the aminoacyl-tRNA.EF-Tu.GTP complex up to the GTP hydrolysis stage on the ribosome. This chain is Elongation factor Ts, found in Burkholderia pseudomallei (strain 1106a).